The primary structure comprises 172 residues: Nucleoside-triphosphatase THEP1 (172 aa).

ATP contacts are provided by residues 11 to 18 (GKPGIGKT) and 101 to 108 (IILIDEIG).

Belongs to the THEP1 NTPase family.

It carries out the reaction a ribonucleoside 5'-triphosphate + H2O = a ribonucleoside 5'-diphosphate + phosphate + H(+). Functionally, has nucleotide phosphatase activity towards ATP, GTP, CTP, TTP and UTP. May hydrolyze nucleoside diphosphates with lower efficiency. This Sulfolobus acidocaldarius (strain ATCC 33909 / DSM 639 / JCM 8929 / NBRC 15157 / NCIMB 11770) protein is Nucleoside-triphosphatase THEP1.